The sequence spans 172 residues: NADH-quinone oxidoreductase subunit B (172 aa).

Residues Cys46, Cys47, Cys111, and Cys141 each coordinate [4Fe-4S] cluster.

Belongs to the complex I 20 kDa subunit family. In terms of assembly, NDH-1 is composed of 14 different subunits. Subunits NuoB, C, D, E, F, and G constitute the peripheral sector of the complex. [4Fe-4S] cluster is required as a cofactor.

The protein localises to the cell membrane. The catalysed reaction is a quinone + NADH + 5 H(+)(in) = a quinol + NAD(+) + 4 H(+)(out). Its function is as follows. NDH-1 shuttles electrons from NADH, via FMN and iron-sulfur (Fe-S) centers, to quinones in the respiratory chain. The immediate electron acceptor for the enzyme in this species is believed to be a menaquinone. Couples the redox reaction to proton translocation (for every two electrons transferred, four hydrogen ions are translocated across the cytoplasmic membrane), and thus conserves the redox energy in a proton gradient. In Bacillus mycoides (strain KBAB4) (Bacillus weihenstephanensis), this protein is NADH-quinone oxidoreductase subunit B.